The sequence spans 150 residues: uncharacterized protein (150 aa).

Positions 1–22 (MVIALKRFSFLASIATLTVLNA) are cleaved as a signal peptide. C23 carries the N-palmitoyl cysteine lipid modification. C23 carries S-diacylglycerol cysteine lipidation.

The protein belongs to the MG067/MG068/MG395 family.

The protein localises to the cell membrane. This is an uncharacterized protein from Mycoplasma pneumoniae (strain ATCC 29342 / M129 / Subtype 1) (Mycoplasmoides pneumoniae).